A 519-amino-acid polypeptide reads, in one-letter code: F-box-like/WD repeat-containing protein TBL1XR1-A (519 aa).

The LisH domain occupies 4-36 (SSDEVNFLVYRYLQESGFSHSAFTFGIESHISQ). Residues 41-86 (GALAPPAALISIIQKGLQYVEAEVSINEDGTLFDGRPIESLSLIDA) form the F-box-like domain. A compositionally biased stretch (low complexity) spans 115-139 (AAAAAATPNNQQPPAKNGENTANGE). A disordered region spans residues 115 to 147 (AAAAAATPNNQQPPAKNGENTANGEENGGHALA). WD repeat units follow at residues 172–211 (GHES…TSGS), 228–267 (PSNK…ASTL), 269–308 (QHKG…AKQQ), 311–349 (FHSA…PIKT), 352–391 (GHTN…CVHD), 394–442 (AHNK…CIHT), 445–484 (KHQE…LVHS), and 486–519 (RGTG…DLRK).

Belongs to the WD repeat EBI family. As to quaternary structure, interacts with heterodimers of rxra and thrb, and this interaction is abrogated by thyroid hormone binding to thrb. Interacts with ncor1.

It is found in the nucleus. F-box-like protein which acts as an integral component of the N-CoR transcriptional corepressor complex. Probably regulates transcription activation mediated by nuclear receptors. May mediate the recruitment of the 19S proteasome complex, leading to the subsequent proteasomal degradation of the N-CoR complex, thereby allowing cofactor exchange and transcription activation. The sequence is that of F-box-like/WD repeat-containing protein TBL1XR1-A (tbl1xr1-a) from Xenopus laevis (African clawed frog).